The sequence spans 121 residues: Small ribosomal subunit protein uS13 (121 aa).

Residues 92–121 (RKGLPVRGQSSKTNARTVKGPRKTVANKKK) are disordered. Residues 110–121 (KGPRKTVANKKK) are compositionally biased toward basic residues.

It belongs to the universal ribosomal protein uS13 family. As to quaternary structure, part of the 30S ribosomal subunit. Forms a loose heterodimer with protein S19. Forms two bridges to the 50S subunit in the 70S ribosome.

In terms of biological role, located at the top of the head of the 30S subunit, it contacts several helices of the 16S rRNA. In the 70S ribosome it contacts the 23S rRNA (bridge B1a) and protein L5 of the 50S subunit (bridge B1b), connecting the 2 subunits; these bridges are implicated in subunit movement. Contacts the tRNAs in the A and P-sites. In Mycoplasma capricolum subsp. capricolum (strain California kid / ATCC 27343 / NCTC 10154), this protein is Small ribosomal subunit protein uS13.